The primary structure comprises 186 residues: ATP-dependent protease subunit HslV (186 aa).

Thr-13 is an active-site residue. Na(+)-binding residues include Ala-167, Cys-170, and Thr-173.

It belongs to the peptidase T1B family. HslV subfamily. A double ring-shaped homohexamer of HslV is capped on each side by a ring-shaped HslU homohexamer. The assembly of the HslU/HslV complex is dependent on binding of ATP.

Its subcellular location is the cytoplasm. It catalyses the reaction ATP-dependent cleavage of peptide bonds with broad specificity.. With respect to regulation, allosterically activated by HslU binding. Protease subunit of a proteasome-like degradation complex believed to be a general protein degrading machinery. The protein is ATP-dependent protease subunit HslV of Allorhizobium ampelinum (strain ATCC BAA-846 / DSM 112012 / S4) (Agrobacterium vitis (strain S4)).